A 227-amino-acid polypeptide reads, in one-letter code: Probable GTP-binding protein EngB (227 aa).

The region spanning 30–219 is the EngB-type G domain; that stretch reads KKPQIIVVGR…MVKINKNVNE (190 aa). Residues 38 to 45, 63 to 67, 80 to 83, 160 to 163, and 197 to 199 contribute to the GTP site; these read GRSNVGKS, GVTLK, DLPG, NKMD, and IGI. 2 residues coordinate Mg(2+): S45 and T65.

This sequence belongs to the TRAFAC class TrmE-Era-EngA-EngB-Septin-like GTPase superfamily. EngB GTPase family. Mg(2+) serves as cofactor.

Its function is as follows. Necessary for normal cell division and for the maintenance of normal septation. This Methanococcus aeolicus (strain ATCC BAA-1280 / DSM 17508 / OCM 812 / Nankai-3) protein is Probable GTP-binding protein EngB.